Here is a 71-residue protein sequence, read N- to C-terminus: Translation initiation factor IF-1 (71 aa).

In terms of domain architecture, S1-like spans 1–71 (MSKDDLIQFT…LTKGRVIHRH (71 aa)).

It belongs to the IF-1 family. Component of the 30S ribosomal translation pre-initiation complex which assembles on the 30S ribosome in the order IF-2 and IF-3, IF-1 and N-formylmethionyl-tRNA(fMet); mRNA recruitment can occur at any time during PIC assembly.

It localises to the cytoplasm. One of the essential components for the initiation of protein synthesis. Stabilizes the binding of IF-2 and IF-3 on the 30S subunit to which N-formylmethionyl-tRNA(fMet) subsequently binds. Helps modulate mRNA selection, yielding the 30S pre-initiation complex (PIC). Upon addition of the 50S ribosomal subunit IF-1, IF-2 and IF-3 are released leaving the mature 70S translation initiation complex. This Rickettsia conorii (strain ATCC VR-613 / Malish 7) protein is Translation initiation factor IF-1.